A 334-amino-acid polypeptide reads, in one-letter code: Ornithine carbamoyltransferase (334 aa).

Carbamoyl phosphate-binding positions include 57–60 (STRT), Gln-84, Arg-108, and 135–138 (HPTQ). Residues Asn-169, Asp-233, and 237-238 (SM) each bind L-ornithine. Residues 275-276 (CL) and Arg-320 each bind carbamoyl phosphate.

This sequence belongs to the aspartate/ornithine carbamoyltransferase superfamily. OTCase family.

The protein resides in the cytoplasm. The enzyme catalyses carbamoyl phosphate + L-ornithine = L-citrulline + phosphate + H(+). It functions in the pathway amino-acid biosynthesis; L-arginine biosynthesis; L-arginine from L-ornithine and carbamoyl phosphate: step 1/3. Functionally, reversibly catalyzes the transfer of the carbamoyl group from carbamoyl phosphate (CP) to the N(epsilon) atom of ornithine (ORN) to produce L-citrulline. The polypeptide is Ornithine carbamoyltransferase (Aliivibrio fischeri (strain ATCC 700601 / ES114) (Vibrio fischeri)).